Reading from the N-terminus, the 550-residue chain is NAD(P)H-quinone oxidoreductase chain 4 3 (550 aa).

Helical transmembrane passes span 5–25 (FPWL…IPLL), 36–56 (YALI…WQHF), 86–106 (ISAP…FSAW), 114–134 (LFYA…VAKD), 135–155 (LFLF…LVCI), 168–188 (FLLY…ALSL), 212–232 (MWLY…FPLH), 243–263 (SSPV…YGLM), 277–297 (FAPL…FSSF), 311–331 (VSHM…GING), 332–352 (AMLQ…LAGV), 375–395 (VFAM…MSGF), 418–438 (ITVF…LSML), and 489–509 (IFIA…PKLL).

The protein belongs to the complex I subunit 4 family.

Its subcellular location is the cellular thylakoid membrane. It carries out the reaction a plastoquinone + NADH + (n+1) H(+)(in) = a plastoquinol + NAD(+) + n H(+)(out). It catalyses the reaction a plastoquinone + NADPH + (n+1) H(+)(in) = a plastoquinol + NADP(+) + n H(+)(out). Functionally, NDH-1 shuttles electrons from NAD(P)H, via FMN and iron-sulfur (Fe-S) centers, to quinones in the respiratory chain. The immediate electron acceptor for the enzyme in this species is believed to be plastoquinone. Couples the redox reaction to proton translocation (for every two electrons transferred, four hydrogen ions are translocated across the cytoplasmic membrane), and thus conserves the redox energy in a proton gradient. The chain is NAD(P)H-quinone oxidoreductase chain 4 3 from Picosynechococcus sp. (strain ATCC 27264 / PCC 7002 / PR-6) (Agmenellum quadruplicatum).